The following is a 509-amino-acid chain: Kynureninase 1 (509 aa).

Pyridoxal 5'-phosphate contacts are provided by residues leucine 154, threonine 155, 183–186 (FPSD), aspartate 270, histidine 273, and tyrosine 295. Lysine 296 is subject to N6-(pyridoxal phosphate)lysine. The pyridoxal 5'-phosphate site is built by tryptophan 345 and asparagine 373.

This sequence belongs to the kynureninase family. In terms of assembly, homodimer. Pyridoxal 5'-phosphate is required as a cofactor.

It localises to the cytoplasm. It carries out the reaction L-kynurenine + H2O = anthranilate + L-alanine + H(+). The enzyme catalyses 3-hydroxy-L-kynurenine + H2O = 3-hydroxyanthranilate + L-alanine + H(+). It functions in the pathway amino-acid degradation; L-kynurenine degradation; L-alanine and anthranilate from L-kynurenine: step 1/1. It participates in cofactor biosynthesis; NAD(+) biosynthesis; quinolinate from L-kynurenine: step 2/3. Functionally, catalyzes the cleavage of L-kynurenine (L-Kyn) and L-3-hydroxykynurenine (L-3OHKyn) into anthranilic acid (AA) and 3-hydroxyanthranilic acid (3-OHAA), respectively. This chain is Kynureninase 1, found in Chaetomium globosum (strain ATCC 6205 / CBS 148.51 / DSM 1962 / NBRC 6347 / NRRL 1970) (Soil fungus).